We begin with the raw amino-acid sequence, 311 residues long: Ribose-5-phosphate isomerase (311 aa).

The span at 22 to 32 (AGGAASGGGGN) shows a compositional bias: gly residues. Residues 22 to 67 (AGGAASGGGGNSWDLPGSHVRLPGRAQSGTRGGAGNTSTSCGDSNS) are disordered. Residue Arg52 is modified to Omega-N-methylarginine. Residues 57–67 (NTSTSCGDSNS) are compositionally biased toward polar residues. At Ser106 the chain carries Phosphoserine.

This sequence belongs to the ribose 5-phosphate isomerase family.

The catalysed reaction is aldehydo-D-ribose 5-phosphate = D-ribulose 5-phosphate. Its pathway is carbohydrate degradation; pentose phosphate pathway; D-ribose 5-phosphate from D-ribulose 5-phosphate (non-oxidative stage): step 1/1. In terms of biological role, catalyzes the reversible conversion of ribose-5-phosphate to ribulose 5-phosphate and participates in the first step of the non-oxidative branch of the pentose phosphate pathway. In Homo sapiens (Human), this protein is Ribose-5-phosphate isomerase.